A 333-amino-acid polypeptide reads, in one-letter code: Calcium uniporter protein, mitochondrial (333 aa).

Residues 1–22 constitute a mitochondrion transit peptide; the sequence is MRNGRCLVTPFVTAQRLANLRN. The Mitochondrial matrix portion of the chain corresponds to 23-214; the sequence is TLWNRQQIAF…QECEAHTDRV (192 aa). Residues 180–193 are a coiled coil; it reads KKLLLQLENAETLL. The interval 195-213 is outer juxtamembrane helix (OJMH); sequence PLHDAKRKIEQECEAHTDR. Residues 215 to 234 form a helical membrane-spanning segment; it reads MWAGFAAMGVQTGLFARLTW. Residues 235–243 lie on the Mitochondrial intermembrane side of the membrane; the sequence is WEYSWDIME. The Selectivity filter signature appears at 239 to 247; that stretch reads WDIMEPVTY. Ca(2+) is bound at residue Glu-243. A helical transmembrane segment spans residues 244 to 260; the sequence is PVTYFATYSTVCATFGY. Residues 261-333 lie on the Mitochondrial matrix side of the membrane; that stretch reads YLYTQQSFEY…SYLSNLEAEK (73 aa). The inner juxtamembrane helix (IJMH) stretch occupies residues 262–271; that stretch reads LYTQQSFEYP. The stretch at 289–316 forms a coiled coil; it reads QNFDIEKYNRLVTEVDELRNQLKRMRDP.

The protein belongs to the MCU (TC 1.A.77) family.

It is found in the mitochondrion inner membrane. It carries out the reaction Ca(2+)(in) = Ca(2+)(out). Inhibited by ruthenium red or its derivative Ru360; possibly by obstructing the pore. In terms of biological role, mitochondrial inner membrane calcium uniporter that mediates calcium uptake into mitochondria. Constitutes a pore-forming and calcium-conducting subunit. Mitochondrial calcium homeostasis plays key roles in cellular physiology and regulates cell bioenergetics, cytoplasmic calcium signals and activation of cell death pathways. Required for rapid mitochondrial calcium uptake and mitochondrial reactive oxygen species (mtROS) production after wounding. In addition, together with mitochondrial calcium regulator micu-1, required for mitochondrial calcium uptake following axon injury in PLM touch receptor neurons. The chain is Calcium uniporter protein, mitochondrial from Caenorhabditis elegans.